Reading from the N-terminus, the 120-residue chain is Large ribosomal subunit protein uL18 (120 aa).

Belongs to the universal ribosomal protein uL18 family. In terms of assembly, part of the 50S ribosomal subunit; part of the 5S rRNA/L5/L18/L25 subcomplex. Contacts the 5S and 23S rRNAs.

This is one of the proteins that bind and probably mediate the attachment of the 5S RNA into the large ribosomal subunit, where it forms part of the central protuberance. This Gluconobacter oxydans (strain 621H) (Gluconobacter suboxydans) protein is Large ribosomal subunit protein uL18.